We begin with the raw amino-acid sequence, 351 residues long: Anthranilate phosphoribosyltransferase (351 aa).

Residues glycine 84, 87 to 88 (GD), 95 to 98 (NISS), 113 to 121 (KHGNRGASS), and alanine 125 each bind 5-phospho-alpha-D-ribose 1-diphosphate. Anthranilate is bound at residue glycine 84. Mg(2+) is bound at residue serine 97. Asparagine 116 lines the anthranilate pocket. Arginine 171 contributes to the anthranilate binding site. Mg(2+) is bound by residues aspartate 229 and lysine 230.

The protein belongs to the anthranilate phosphoribosyltransferase family. In terms of assembly, homodimer. It depends on Mg(2+) as a cofactor.

The catalysed reaction is N-(5-phospho-beta-D-ribosyl)anthranilate + diphosphate = 5-phospho-alpha-D-ribose 1-diphosphate + anthranilate. The protein operates within amino-acid biosynthesis; L-tryptophan biosynthesis; L-tryptophan from chorismate: step 2/5. Its function is as follows. Catalyzes the transfer of the phosphoribosyl group of 5-phosphorylribose-1-pyrophosphate (PRPP) to anthranilate to yield N-(5'-phosphoribosyl)-anthranilate (PRA). This Clavibacter sepedonicus (Clavibacter michiganensis subsp. sepedonicus) protein is Anthranilate phosphoribosyltransferase.